Consider the following 115-residue polypeptide: U3-lycotoxin-Ls1j (115 aa).

Positions 1 to 20 (MKFVLLFGVFLVTLFSYSSA) are cleaved as a signal peptide. A propeptide spanning residues 21 to 44 (EMLDDFDQADEDELLSLIEKEEAR) is cleaved from the precursor. 4 disulfide bridges follow: Cys48-Cys63, Cys55-Cys72, Cys62-Cys87, and Cys74-Cys85.

The protein belongs to the neurotoxin 19 (CSTX) family. 01 subfamily. Expressed by the venom gland.

It localises to the secreted. The chain is U3-lycotoxin-Ls1j from Lycosa singoriensis (Wolf spider).